The chain runs to 280 residues: Energy-coupling factor transporter ATP-binding protein EcfA1 (280 aa).

Positions 6 to 241 (LRIENISFQY…SHMLQEIGLD (236 aa)) constitute an ABC transporter domain. Position 40–47 (40–47 (GQNGSGKS)) interacts with ATP.

The protein belongs to the ABC transporter superfamily. Energy-coupling factor EcfA family. In terms of assembly, forms a stable energy-coupling factor (ECF) transporter complex composed of 2 membrane-embedded substrate-binding proteins (S component), 2 ATP-binding proteins (A component) and 2 transmembrane proteins (T component).

It localises to the cell membrane. Its function is as follows. ATP-binding (A) component of a common energy-coupling factor (ECF) ABC-transporter complex. Unlike classic ABC transporters this ECF transporter provides the energy necessary to transport a number of different substrates. The protein is Energy-coupling factor transporter ATP-binding protein EcfA1 of Bacillus cereus (strain ATCC 14579 / DSM 31 / CCUG 7414 / JCM 2152 / NBRC 15305 / NCIMB 9373 / NCTC 2599 / NRRL B-3711).